A 261-amino-acid polypeptide reads, in one-letter code: Kallikrein 1-related peptidase b5 (261 aa).

An N-terminal signal peptide occupies residues Met1–Ala18. A propeptide spans Pro19–Arg24 (activation peptide). The 234-residue stretch at Ile25 to Ala258 folds into the Peptidase S1 domain. Intrachain disulfides connect Cys31–Cys173, Cys50–Cys66, Cys152–Cys219, Cys184–Cys198, and Cys209–Cys234. His65 acts as the Charge relay system in catalysis. A glycan (N-linked (GlcNAc...) asparagine) is linked at Asn102. Residue Asp120 is the Charge relay system of the active site. Catalysis depends on Ser213, which acts as the Charge relay system.

Belongs to the peptidase S1 family. Kallikrein subfamily.

The enzyme catalyses Preferential cleavage of Arg-|-Xaa bonds in small molecule substrates. Highly selective action to release kallidin (lysyl-bradykinin) from kininogen involves hydrolysis of Met-|-Xaa or Leu-|-Xaa.. Functionally, glandular kallikreins cleave Met-Lys and Arg-Ser bonds in kininogen to release Lys-bradykinin. The chain is Kallikrein 1-related peptidase b5 (Klk1b5) from Mus musculus (Mouse).